Reading from the N-terminus, the 145-residue chain is Ecdysteroid-regulated 16 kDa protein (145 aa).

The N-terminal stretch at methionine 1–alanine 16 is a signal peptide. Intrachain disulfides connect cysteine 22–cysteine 137 and cysteine 90–cysteine 97. An N-linked (GlcNAc...) asparagine glycan is attached at asparagine 51.

This sequence belongs to the NPC2 family.

The protein localises to the secreted. This Manduca sexta (Tobacco hawkmoth) protein is Ecdysteroid-regulated 16 kDa protein (ESR16).